We begin with the raw amino-acid sequence, 425 residues long: Polyribonucleotide 5'-hydroxyl-kinase Clp1 (425 aa).

ATP-binding positions include Glu22, Lys62, and 124–129 (DVGKST).

This sequence belongs to the Clp1 family. Clp1 subfamily. In terms of assembly, component of the tRNA splicing endonuclease complex. Component of pre-mRNA cleavage complex II (CF-II).

It localises to the nucleus. The catalysed reaction is a 5'-end dephospho-2'-deoxyribonucleoside-DNA + ATP = a 5'-end 5'-phospho-2'-deoxyribonucleoside-DNA + ADP + H(+). It catalyses the reaction a 5'-end dephospho-ribonucleoside-RNA + ATP = a 5'-end 5'-phospho-ribonucleoside-RNA + ADP + H(+). Its function is as follows. Polynucleotide kinase that can phosphorylate the 5'-hydroxyl groups of double-stranded RNA (dsRNA), single-stranded RNA (ssRNA), double stranded DNA (dsDNA) and double-stranded DNA:RNA hybrids. dsRNA is phosphorylated more efficiently than dsDNA, and the RNA component of a DNA:RNA hybrid is phosphorylated more efficiently than the DNA component. Plays a role in both tRNA splicing and mRNA 3'-end formation. Component of the tRNA splicing endonuclease complex: phosphorylates the 5'-terminus of the tRNA 3'-exon during tRNA splicing; this phosphorylation event is a prerequisite for the subsequent ligation of the two exon halves and the production of a mature tRNA. Its role in tRNA splicing and maturation is required for cerebellar development. Component of the pre-mRNA cleavage complex II (CF-II), which seems to be required for mRNA 3'-end formation. Also phosphorylates the 5'-terminus of exogenously introduced short interfering RNAs (siRNAs), which is a necessary prerequisite for their incorporation into the RNA-induced silencing complex (RISC). However, endogenous siRNAs and microRNAs (miRNAs) that are produced by the cleavage of dsRNA precursors by dicer1 already contain a 5'-phosphate group, so this protein may be dispensible for normal RNA-mediated gene silencing. This is Polyribonucleotide 5'-hydroxyl-kinase Clp1 from Gallus gallus (Chicken).